The sequence spans 291 residues: 4-hydroxy-tetrahydrodipicolinate synthase (291 aa).

Thr-44 contacts pyruvate. The Proton donor/acceptor role is filled by Tyr-132. Lys-160 (schiff-base intermediate with substrate) is an active-site residue. Residue Ile-202 participates in pyruvate binding.

Belongs to the DapA family. As to quaternary structure, homotetramer; dimer of dimers.

The protein resides in the cytoplasm. It catalyses the reaction L-aspartate 4-semialdehyde + pyruvate = (2S,4S)-4-hydroxy-2,3,4,5-tetrahydrodipicolinate + H2O + H(+). It participates in amino-acid biosynthesis; L-lysine biosynthesis via DAP pathway; (S)-tetrahydrodipicolinate from L-aspartate: step 3/4. Its function is as follows. Catalyzes the condensation of (S)-aspartate-beta-semialdehyde [(S)-ASA] and pyruvate to 4-hydroxy-tetrahydrodipicolinate (HTPA). The protein is 4-hydroxy-tetrahydrodipicolinate synthase of Rhodospirillum centenum (strain ATCC 51521 / SW).